The chain runs to 231 residues: Orotidine 5'-phosphate decarboxylase (231 aa).

Residues D11, K33, 60–69 (DLKLHDIPNT), T117, R179, Q187, G207, and R208 each bind substrate. K62 (proton donor) is an active-site residue.

It belongs to the OMP decarboxylase family. Type 1 subfamily. Homodimer.

It carries out the reaction orotidine 5'-phosphate + H(+) = UMP + CO2. The protein operates within pyrimidine metabolism; UMP biosynthesis via de novo pathway; UMP from orotate: step 2/2. Functionally, catalyzes the decarboxylation of orotidine 5'-monophosphate (OMP) to uridine 5'-monophosphate (UMP). This Ehrlichia chaffeensis (strain ATCC CRL-10679 / Arkansas) protein is Orotidine 5'-phosphate decarboxylase.